We begin with the raw amino-acid sequence, 34 residues long: COP9 signalosome complex subunit 5a (34 aa).

It belongs to the peptidase M67A family. CSN5 subfamily. Component of the CSN complex, probably composed of CSN1, CSN2, CSN3, CSN4, CSN5 (CSN5A or CSN5B), CSN6 (CSN6A or CSN6B), CSN7 and CSN8. It depends on a divalent metal cation as a cofactor.

The protein localises to the cytoplasm. Its subcellular location is the nucleus. Its function is as follows. Probable protease subunit of the COP9 signalosome complex (CSN), a complex involved in various cellular and developmental processes such as photomorphogenesis and auxin and jasmonate responses. The CSN complex is an essential regulator of the ubiquitin (Ubl) conjugation pathway by mediating the deneddylation of the cullin subunits of the SCF-type E3 ligase complexes, leading to decrease the Ubl ligase activity of SCF. In the complex, it probably acts as the catalytic center that mediates the cleavage of Nedd8 from cullins. It however has no metalloprotease activity by itself and requires the other subunits of the CSN complex. The CSN complex is involved in repression of photomorphogenesis in darkness by regulating the activity of COP1-containing Ubl ligase complexes. This Brassica oleracea (Wild cabbage) protein is COP9 signalosome complex subunit 5a (CSN5A).